A 219-amino-acid chain; its full sequence is Large ribosomal subunit protein uL3 (219 aa).

The interval 133 to 153 (GRASHGNSRSHNVPGSIGMAQ) is disordered. Glutamine 153 is modified (N5-methylglutamine).

It belongs to the universal ribosomal protein uL3 family. In terms of assembly, part of the 50S ribosomal subunit. Forms a cluster with proteins L14 and L19. Methylated by PrmB.

In terms of biological role, one of the primary rRNA binding proteins, it binds directly near the 3'-end of the 23S rRNA, where it nucleates assembly of the 50S subunit. This chain is Large ribosomal subunit protein uL3, found in Burkholderia mallei (strain NCTC 10247).